A 306-amino-acid chain; its full sequence is Diacylglycerol kinase (306 aa).

In terms of domain architecture, DAGKc spans 1–132 (MRKRARIIYN…VDIGKMNSRY (132 aa)). Residues 10 to 14 (NPTSG), Thr-41, 67 to 73 (GDGTLNE), and Thr-94 each bind ATP. 3 residues coordinate Mg(2+): Arg-213, Asp-216, and Tyr-218. Residue Glu-273 is the Proton acceptor of the active site.

The protein belongs to the diacylglycerol/lipid kinase family. Homodimer. Requires Mg(2+) as cofactor.

The enzyme catalyses a 1,2-diacyl-sn-glycerol + ATP = a 1,2-diacyl-sn-glycero-3-phosphate + ADP + H(+). In terms of biological role, catalyzes the phosphorylation of diacylglycerol (DAG) into phosphatidic acid. Is a key enzyme involved in the production of lipoteichoic acid by reintroducing DAG formed from the breakdown of membrane phospholipids into the phosphatidylglycerol biosynthetic pathway. The sequence is that of Diacylglycerol kinase (dagK) from Staphylococcus carnosus (strain TM300).